Reading from the N-terminus, the 697-residue chain is Glycine--tRNA ligase beta subunit (697 aa).

Belongs to the class-II aminoacyl-tRNA synthetase family. Tetramer of two alpha and two beta subunits.

The protein localises to the cytoplasm. The enzyme catalyses tRNA(Gly) + glycine + ATP = glycyl-tRNA(Gly) + AMP + diphosphate. This is Glycine--tRNA ligase beta subunit from Cereibacter sphaeroides (strain ATCC 17023 / DSM 158 / JCM 6121 / CCUG 31486 / LMG 2827 / NBRC 12203 / NCIMB 8253 / ATH 2.4.1.) (Rhodobacter sphaeroides).